Here is a 423-residue protein sequence, read N- to C-terminus: MGNVVAMILAGGQGTRLGVLTERIAKPAVPFGGKYRLIDFTLSNCVNSGIYRVGVLTQYRPHVLAKHIGIGRPWDLDRKDGGVEILPPYVGRNESDWYKGTANAVYQNLEFLEENDAELVLVLSGDHVYAMNYNDLIDYHLLKGADGTIACMEVPLEEASRFGIMITDVEGRIVDFEEKPPKPRSNLASLGIYVFNYEFLKRVLIEDENDPNSSHDFGKDVIPKILRENKGSLYAFRFDGYWRDVGTIRSYWEANLELVLPVPPFNLYDPNWRFFTHSEEMPPAYVAPEARTSTSLISEGAEVYGEVTNSVIFQGVRIGKGTVVKNSVIMTRTEIGENCYLENVIVAENVKIGNNVKMGVGEDAKSKLDPKIYTGLLTVVGMNSTIPDDVVIGKNCVIGVGVKPEDFKTKKLESGDFVLPREE.

Alpha-D-glucose 1-phosphate contacts are provided by residues Tyr-98, Gly-163, 178-179, and Ser-189; that span reads EK.

The protein belongs to the bacterial/plant glucose-1-phosphate adenylyltransferase family. As to quaternary structure, homotetramer.

It catalyses the reaction alpha-D-glucose 1-phosphate + ATP + H(+) = ADP-alpha-D-glucose + diphosphate. It participates in glycan biosynthesis; glycogen biosynthesis. Involved in the biosynthesis of ADP-glucose, a building block required for the elongation reactions to produce glycogen. Catalyzes the reaction between ATP and alpha-D-glucose 1-phosphate (G1P) to produce pyrophosphate and ADP-Glc. The sequence is that of Glucose-1-phosphate adenylyltransferase from Thermotoga neapolitana (strain ATCC 49049 / DSM 4359 / NBRC 107923 / NS-E).